Consider the following 401-residue polypeptide: NAD(P)H-quinone oxidoreductase subunit H, chloroplastic (401 aa).

Belongs to the complex I 49 kDa subunit family. As to quaternary structure, NDH is composed of at least 16 different subunits, 5 of which are encoded in the nucleus.

Its subcellular location is the plastid. It is found in the chloroplast thylakoid membrane. The enzyme catalyses a plastoquinone + NADH + (n+1) H(+)(in) = a plastoquinol + NAD(+) + n H(+)(out). The catalysed reaction is a plastoquinone + NADPH + (n+1) H(+)(in) = a plastoquinol + NADP(+) + n H(+)(out). NDH shuttles electrons from NAD(P)H:plastoquinone, via FMN and iron-sulfur (Fe-S) centers, to quinones in the photosynthetic chain and possibly in a chloroplast respiratory chain. The immediate electron acceptor for the enzyme in this species is believed to be plastoquinone. Couples the redox reaction to proton translocation, and thus conserves the redox energy in a proton gradient. The chain is NAD(P)H-quinone oxidoreductase subunit H, chloroplastic from Aethionema cordifolium (Lebanon stonecress).